The chain runs to 523 residues: MSHEASGLKEDRKKVLKSAFLMASGTLTSRILGLFRDIALGALFDRAVTDAWTAAFRIPNLFRRLFGEGSLAVSFIPVFMQTQSEDPTGDRARNLANAFYSLLLVFLGVLTLLGIVYVEPLFRLILSSDYALDAAKWELTLRMGRIMFGFVFFVCTYAFYMGILNALGSFGLPALAPALLNVSMLVFTFMPPQWFAVHGDGLAWGVLIGGLLQALLLAVALKQRNYLPRLQKTLWTPEVKAVVRGMLPGLIGMGLLQFSTLVNLYFASSLPEGSISYIYWADRLLELPLSLISVSIGAALLPTLSDFANRGLKEKFQETAEESFLMNLFLAWPAALGLYILAEPIIEVLFLRGKFTVQDVQMTAAILRIYAVSLLLVSCSRVLMPLYYSVKNTKVPMVLALVSLAVHVSLAPVLMRQWGLEGLMISGVVAALINAVLLMGLLKKYSPGIRMSVLLRPALKFVLAGAGMVISLQAYELLMAQTGRGLQMLALFVTILLAVVAYFGLAYVLGCEQISRIRRSSQP.

Transmembrane regions (helical) follow at residues 98-118, 146-166, 170-190, 201-221, 246-266, 284-304, 328-348, 360-380, 395-415, 422-442, 461-481, and 489-509; these read AFYS…IVYV, IMFG…ILNA, FGLP…FTFM, GLAW…AVAL, MLPG…NLYF, LLEL…LPTL, LFLA…IIEV, VQMT…VSCS, VPMV…PVLM, GLMI…MGLL, FVLA…LMAQ, and LALF…AYVL.

The protein belongs to the MurJ/MviN family.

The protein localises to the cell inner membrane. It functions in the pathway cell wall biogenesis; peptidoglycan biosynthesis. In terms of biological role, involved in peptidoglycan biosynthesis. Transports lipid-linked peptidoglycan precursors from the inner to the outer leaflet of the cytoplasmic membrane. The polypeptide is Probable lipid II flippase MurJ (Bdellovibrio bacteriovorus (strain ATCC 15356 / DSM 50701 / NCIMB 9529 / HD100)).